The chain runs to 467 residues: Argininosuccinate lyase (467 aa).

The protein belongs to the lyase 1 family. Argininosuccinate lyase subfamily.

It is found in the cytoplasm. It catalyses the reaction 2-(N(omega)-L-arginino)succinate = fumarate + L-arginine. Its pathway is amino-acid biosynthesis; L-arginine biosynthesis; L-arginine from L-ornithine and carbamoyl phosphate: step 3/3. The chain is Argininosuccinate lyase from Anaeromyxobacter sp. (strain K).